We begin with the raw amino-acid sequence, 101 residues long: Urease subunit beta (101 aa).

This sequence belongs to the urease beta subunit family. In terms of assembly, heterotrimer of UreA (gamma), UreB (beta) and UreC (alpha) subunits. Three heterotrimers associate to form the active enzyme.

The protein localises to the cytoplasm. It catalyses the reaction urea + 2 H2O + H(+) = hydrogencarbonate + 2 NH4(+). Its pathway is nitrogen metabolism; urea degradation; CO(2) and NH(3) from urea (urease route): step 1/1. The chain is Urease subunit beta from Cereibacter sphaeroides (strain ATCC 17029 / ATH 2.4.9) (Rhodobacter sphaeroides).